The primary structure comprises 477 residues: UDP-sulfoquinovose synthase, chloroplastic (477 aa).

Residues 1–21 are disordered; that stretch reads MAHLLSASCPSVISLSSSSSK. The N-terminal 86 residues, 1 to 86, are a transit peptide targeting the chloroplast; the sequence is MAHLLSASCP…TNNSSSKPKR (86 aa). NAD(+) contacts are provided by residues 95–96, 115–119, 158–159, Arg184, and Asn202; these read YC, DNLVR, and DI. A substrate-binding site is contributed by Arg184. 2 residues coordinate substrate: Thr228 and Tyr265. Thr228 is a catalytic residue. NAD(+) contacts are provided by Tyr265 and Lys269. Tyr265 functions as the Proton acceptor in the catalytic mechanism. The active site involves Lys269. Gln292 provides a ligand contact to substrate. NAD(+) is bound at residue Val295. Substrate is bound by residues 322 to 325, 337 to 339, and 410 to 412; these read ALNR, TVY, and RVE.

The protein belongs to the NAD(P)-dependent epimerase/dehydratase family. Homodimer. It depends on NAD(+) as a cofactor.

Its subcellular location is the plastid. It localises to the chloroplast. The enzyme catalyses sulfite + UDP-alpha-D-glucose + H(+) = UDP-alpha-D-6-sulfoquinovose + H2O. Concentrations above 100 uM sulfite inhibit the reaction. Functionally, involved in the biosynthesis of sulfolipids found in thylakoid membranes. Converts UDP-glucose and sulfite to the sulfolipid head group precursor UDP-sulfoquinovose. This chain is UDP-sulfoquinovose synthase, chloroplastic (SQD1), found in Arabidopsis thaliana (Mouse-ear cress).